The primary structure comprises 158 residues: Glutathione peroxidase-like peroxiredoxin gpx1 (158 aa).

The Cysteine sulfenic acid (-SOH) intermediate role is filled by C36. Residues C36 and C82 are joined by a disulfide bond.

Belongs to the glutathione peroxidase family. In terms of assembly, monomer.

Its subcellular location is the cytoplasm. The protein resides in the mitochondrion. It carries out the reaction a hydroperoxide + [thioredoxin]-dithiol = an alcohol + [thioredoxin]-disulfide + H2O. Its function is as follows. Glutathione peroxidase-like protein that protects cells during oxidative stress. Has peroxidase activity reducing hydrogen peroxide, alkyl and phospholipid hydroperoxides using preferentially thioredoxin as a reducing power. May act as a scavenger of H(2)O(2). In Schizosaccharomyces pombe (strain 972 / ATCC 24843) (Fission yeast), this protein is Glutathione peroxidase-like peroxiredoxin gpx1.